Reading from the N-terminus, the 146-residue chain is Ribonuclease H (146 aa).

The 143-residue stretch at 1–143 (MQKKIIVYTD…CDELARQAIK (143 aa)) folds into the RNase H type-1 domain. Mg(2+)-binding residues include Asp10, Glu48, Asp70, and Asp135.

The protein belongs to the RNase H family. Monomer. The cofactor is Mg(2+).

It localises to the cytoplasm. It carries out the reaction Endonucleolytic cleavage to 5'-phosphomonoester.. Its function is as follows. Endonuclease that specifically degrades the RNA of RNA-DNA hybrids. The polypeptide is Ribonuclease H (Chlorobium phaeobacteroides (strain DSM 266 / SMG 266 / 2430)).